Here is a 299-residue protein sequence, read N- to C-terminus: Riboflavin transporter ImpX (299 aa).

2 EamA domains span residues Lys-6–Thr-144 and Ser-162–Lys-294. Helical transmembrane passes span Gly-7–Pro-27, Val-34–Gly-54, Asp-68–Val-88, Val-101–Leu-121, Tyr-129–Leu-149, Leu-158–Phe-178, Ile-202–Gly-222, Trp-224–Phe-244, Val-253–Asn-273, and Val-276–Ser-296.

Belongs to the EamA transporter family.

Its subcellular location is the cell membrane. In terms of biological role, transports riboflavin into the cell. This chain is Riboflavin transporter ImpX, found in Fusobacterium nucleatum subsp. nucleatum (strain ATCC 23726 / VPI 4351).